Here is a 210-residue protein sequence, read N- to C-terminus: Ras-related protein SEC4 (210 aa).

Residue 21 to 28 (GDSGVGKS) coordinates GTP. Residues 43 to 51 (FITTIGIDF) carry the Effector region motif. GTP contacts are provided by residues 69–73 (DTAGQ) and 127–130 (NKCD). Residues Cys-209 and Cys-210 are each lipidated (S-geranylgeranyl cysteine).

Belongs to the small GTPase superfamily. Rab family.

The protein resides in the cytoplasmic vesicle. Its subcellular location is the secretory vesicle membrane. The protein localises to the cell membrane. Involved in exocytosis. Maybe by regulating the binding and fusion of secretory vesicles with the cell surface. The GTP-bound form of SEC4 may interact with an effector, thereby stimulating its activity and leading to exocytotic fusion. SEC4 may be an upstream activator of the 19.5S SEC8/SEC15 particle. SEC4 probably interacts directly with SEC8; it could serve as the attachment site for the SEC8/SEC15 particle. In Candida albicans (strain SC5314 / ATCC MYA-2876) (Yeast), this protein is Ras-related protein SEC4 (SEC4).